The chain runs to 963 residues: Protocadherin alpha-C1 (963 aa).

The signal sequence occupies residues 1-18 (MVGCGVAVLCLWVSCGAA). 5 Cadherin domains span residues 19-124 (AGQL…SPLF), 125-233 (PAGD…APVF), 234-340 (ERSV…APEL), 349-445 (VPED…TPNF), and 446-555 (PQPQ…YPVI). At 19-683 (AGQLEYSVPE…GGQLSAQNLY (665 aa)) the chain is on the extracellular side. Residue Asn-38 is glycosylated (N-linked (GlcNAc...) asparagine). N-linked (GlcNAc...) asparagine glycosylation is found at Asn-248 and Asn-274. An N-linked (GlcNAc...) asparagine glycan is attached at Asn-562. The Cadherin 6 domain maps to 570–667 (VPRSARTGHL…NSVPQLLPDF (98 aa)). A helical membrane pass occupies residues 684–704 (LVIALACISFLFLGCLLFFVC). The Cytoplasmic segment spans residues 705–963 (TKLHQSPGCC…GNSTTDNSDQ (259 aa)). 4 PXXP repeats span residues 812-815 (PRQP), 845-848 (PGGP), 886-889 (PGNP), and 904-907 (PGSP). A 4 X 4 AA repeats of P-X-X-P region spans residues 812 to 907 (PRQPNPDWRY…PDKFIIPGSP (96 aa)). A disordered region spans residues 844-963 (GPGGPDQQWP…GNSTTDNSDQ (120 aa)). Residues 922 to 936 (DKSDFITFGKKEETK) are compositionally biased toward basic and acidic residues.

The protein localises to the cell membrane. Its function is as follows. Potential calcium-dependent cell-adhesion protein. May be involved in the establishment and maintenance of specific neuronal connections in the brain. The polypeptide is Protocadherin alpha-C1 (PCDHAC1) (Homo sapiens (Human)).